A 194-amino-acid chain; its full sequence is dTTP/UTP pyrophosphatase (194 aa).

Aspartate 73 serves as the catalytic Proton acceptor.

This sequence belongs to the Maf family. YhdE subfamily. Requires a divalent metal cation as cofactor.

It localises to the cytoplasm. It carries out the reaction dTTP + H2O = dTMP + diphosphate + H(+). It catalyses the reaction UTP + H2O = UMP + diphosphate + H(+). Functionally, nucleoside triphosphate pyrophosphatase that hydrolyzes dTTP and UTP. May have a dual role in cell division arrest and in preventing the incorporation of modified nucleotides into cellular nucleic acids. The chain is dTTP/UTP pyrophosphatase from Clostridium botulinum (strain Loch Maree / Type A3).